The primary structure comprises 368 residues: COP9 signalosome complex subunit 5 (368 aa).

An MPN domain is found at 56 to 193 (IKISAIALLK…IGAFRTYPEG (138 aa)). Residues histidine 139, histidine 141, and aspartate 152 each contribute to the Zn(2+) site. The short motif at 139 to 152 (HSHPGYGCWLSGID) is the JAMM motif element. The segment at 347–368 (TEPEKAGPSPSAPEPAVEMADA) is disordered.

This sequence belongs to the peptidase M67A family. CSN5 subfamily. In terms of assembly, component of the CSN complex, probably composed of csn-1, csn-2, csn-3, csn-4, csn-5, csn-6 and csn-7. Within the complex it probably interacts directly with csn-1. Interacts with glh-1 and glh-3. Interacts with lag-1. Interacts with kgb-1. It depends on a divalent metal cation as a cofactor.

Its subcellular location is the cytoplasm. It localises to the nucleus. Probable protease subunit of the COP9 signalosome complex (CSN), a complex involved in various cellular and developmental processes. The CSN complex is an essential regulator of the ubiquitin (Ubl) conjugation pathway by mediating the deneddylation of the cullin subunits of the SCF-type E3 ligase complexes, leading to decrease the Ubl ligase activity of SCF. In the complex, it probably acts as the catalytic center that mediates the cleavage of Nedd8 from cullins. It however has no metalloprotease activity by itself and requires the other subunits of the CSN complex. The CSN complex plays an essential role in embryogenesis and oogenesis and is required to regulate microtubule stability in the early embryo. Mediates mei-3/katanin targeting for degradation at the meiosis to mitosis transition via deneddylation of cul-3. May stabilize glh-1 protein levels by antagonizing kgb-1. This is COP9 signalosome complex subunit 5 (csn-5) from Caenorhabditis elegans.